Here is a 289-residue protein sequence, read N- to C-terminus: Phenylalanine-4-hydroxylase (289 aa).

Positions 144, 149, and 189 each coordinate Fe cation.

The protein belongs to the biopterin-dependent aromatic amino acid hydroxylase family. Fe(2+) serves as cofactor.

The catalysed reaction is (6R)-L-erythro-5,6,7,8-tetrahydrobiopterin + L-phenylalanine + O2 = (4aS,6R)-4a-hydroxy-L-erythro-5,6,7,8-tetrahydrobiopterin + L-tyrosine. Its pathway is amino-acid degradation; L-phenylalanine degradation; acetoacetate and fumarate from L-phenylalanine: step 1/6. This chain is Phenylalanine-4-hydroxylase (phhA), found in Vibrio cholerae serotype O1 (strain ATCC 39315 / El Tor Inaba N16961).